A 156-amino-acid polypeptide reads, in one-letter code: Ribosome maturation factor RimP (156 aa).

This sequence belongs to the RimP family.

The protein resides in the cytoplasm. Functionally, required for maturation of 30S ribosomal subunits. This is Ribosome maturation factor RimP from Anoxybacillus flavithermus (strain DSM 21510 / WK1).